The sequence spans 342 residues: Terpene cyclase resF (342 aa).

Helical transmembrane passes span 5–25 (VSVV…GVFA), 81–101 (FMAQ…TEDF), 115–135 (WGVF…GVCF), 151–171 (STWI…MLIF), and 182–202 (IWGV…ASLL). N-linked (GlcNAc...) asparagine glycosylation is present at N224. A run of 3 helical transmembrane segments spans residues 229 to 249 (YVVA…FHLG), 269 to 289 (FLQI…WHEL), and 305 to 325 (YLLL…AWAL).

This sequence belongs to the membrane-bound ascI terpene cyclase family.

Its subcellular location is the membrane. It participates in antifungal biosynthesis. In terms of biological role, cyclase; part of the gene cluster that mediates the biosynthesis of the tetrahydropyranyl antifungal agent restricticin that acts as an inhibitor of CYP51 and blocks the ergosterol biosynthesis. The highly reducing polyketide synthase resH, the short chain dehydrogenase resG, the cyclase resF, the FAD-dependent monooxygenase resA and the enoylreductase resD are required to generate the first stable intermediate desmethylrestrictinol. ResH with resD biosynthesize the first polyketide chain intermediate that is reduced by resG, followed by epoxidation by resA before 6-endo cyclization via epoxide opening by resF leads to desmethylrestrictinol. The methyltransferase resE then catalyzes the C4 O-methylation of desmethylrestrictinol to produce restrictinol, and the nonribosomal peptide synthetase resC catalyzes the C3 esterification of restrictinol with glycine that leads to restricticin. The chain is Terpene cyclase resF from Aspergillus sclerotiorum.